The sequence spans 251 residues: Uroporphyrinogen-III synthase (251 aa).

Residues 231–251 (PAPNPESLASSIVAFDEENSS) are disordered.

Belongs to the uroporphyrinogen-III synthase family.

The catalysed reaction is hydroxymethylbilane = uroporphyrinogen III + H2O. The protein operates within porphyrin-containing compound metabolism; protoporphyrin-IX biosynthesis; coproporphyrinogen-III from 5-aminolevulinate: step 3/4. Catalyzes cyclization of the linear tetrapyrrole, hydroxymethylbilane, to the macrocyclic uroporphyrinogen III. This is Uroporphyrinogen-III synthase (ups1) from Schizosaccharomyces pombe (strain 972 / ATCC 24843) (Fission yeast).